The following is a 557-amino-acid chain: Formate--tetrahydrofolate ligase (557 aa).

66–73 contributes to the ATP binding site; the sequence is TPAGEGKS.

Belongs to the formate--tetrahydrofolate ligase family.

The enzyme catalyses (6S)-5,6,7,8-tetrahydrofolate + formate + ATP = (6R)-10-formyltetrahydrofolate + ADP + phosphate. The protein operates within one-carbon metabolism; tetrahydrofolate interconversion. In Clostridium botulinum (strain ATCC 19397 / Type A), this protein is Formate--tetrahydrofolate ligase.